Here is an 860-residue protein sequence, read N- to C-terminus: Probable linoleate 9S-lipoxygenase 4 (860 aa).

A PLAT domain is found at 29–159 (NALDFTDLAG…RYKSDRIFFA (131 aa)). Residues 162–860 (PYLPSETPEL…GKGIPNSVSI (699 aa)) form the Lipoxygenase domain. Residues 209–246 (PDQGKENVRTTLGGSADYPYPRRGRTGRPPTRTDPKSE) form a disordered region. Residues His-521, His-526, His-712, Asn-716, and Ile-860 each contribute to the Fe cation site.

Belongs to the lipoxygenase family. As to quaternary structure, monomer. It depends on Fe cation as a cofactor. As to expression, expressed in tubers and roots. Not detected in leaves, flowers, stems, shoot tips, or axillary buds.

Its subcellular location is the cytoplasm. It catalyses the reaction (9Z,12Z)-octadecadienoate + O2 = (9S)-hydroperoxy-(10E,12Z)-octadecadienoate. The protein operates within lipid metabolism; oxylipin biosynthesis. In terms of biological role, plant lipoxygenases may be involved in a number of diverse aspects of plant physiology including growth and development, pest resistance, and senescence or responses to wounding. Catalyzes the hydroperoxidation of lipids containing a cis,cis-1,4-pentadiene structure. The chain is Probable linoleate 9S-lipoxygenase 4 (LOX1.4) from Solanum tuberosum (Potato).